The chain runs to 630 residues: Neuronal acetylcholine receptor subunit alpha-4 (630 aa).

A signal peptide spans 1–30; that stretch reads MANSGTGAPPPLLLLPLLLLLGTGLLPASS. Topologically, residues 32 to 249 are extracellular; the sequence is IETRAHAEER…IIRRLPLFYT (218 aa). The N-linked (GlcNAc...) asparagine glycan is linked to Asn-59. Residues Val-78 and Glu-80 each coordinate Ca(2+). N-linked (GlcNAc...) asparagine glycans are attached at residues Asn-109 and Asn-176. 2 disulfide bridges follow: Cys-163-Cys-177 and Cys-227-Cys-228. A helical membrane pass occupies residues 250 to 270; sequence INLIIPCLLISCLTVLVFYLP. Cys-273 carries S-palmitoyl cysteine lipidation. 2 consecutive transmembrane segments (helical) span residues 279 to 299 and 313 to 333; these read LCISVLLSLTVFLLLITEIIP and LLFTMIFVTLSIVITVFVLNV. At 334–604 the chain is on the cytoplasmic side; it reads HHRSPRTHTM…WKYVAMVIDR (271 aa). Disordered stretches follow at residues 418–463 and 505–526; these read TAVE…SGAP and SLADSKPTSSPTSLKARPSQLP. Ser-428 is subject to Phosphoserine. Over residues 434 to 443 the composition is skewed to basic and acidic residues; it reads PDLKTSEVEK. A compositionally biased stretch (pro residues) spans 447–457; it reads CPSPGSCPPPK. A phosphoserine mark is found at Ser-542 and Ser-545. A helical transmembrane segment spans residues 605 to 625; the sequence is IFLWMFIIVCLLGTVGLFLPP.

The protein belongs to the ligand-gated ion channel (TC 1.A.9) family. Acetylcholine receptor (TC 1.A.9.1) subfamily. Alpha-4/CHRNA4 sub-subfamily. As to quaternary structure, neuronal AChR is composed of two different types of subunits: alpha and beta. CHRNA4 forms heteropentameric neuronal acetylcholine receptors with CHRNB2 and CHRNB4, as well as CHRNA5 and CHRNB3 as accesory subunits. Found in two major stoichiometric forms, LS (low agonist sensitivity): (CHRNA4)3:(CHRNB2)2 and HS (high agonist sensitivity): (CHRNA4)2:(CHRNB2)3, the two stoichiometric forms differ in their unitary conductance, calcium permeability, ACh sensitivity and potentiation by divalent cation. Cells produce predominantly an (CHRNA4)3:(CHRNB2)2 nAChR. The (CHRNA4)2:(CHRNB2)3 expression is selectively up-regulated by nicotine and has lower single channel conductance and calcium permeability. In the striatum, also forms CHRNA4:CHRNA6:CHRNB2 complexes. Also found in the stoichiometric form: (CHRNA4:CHRNB2)2:CHRNB3. Interacts with RIC3; which is required for proper folding and assembly. Interacts with LYPD6. As to expression, in various regions of the central nervous system. Expressed in hippocampal neurons.

It localises to the presynaptic cell membrane. It is found in the cell membrane. The enzyme catalyses Ca(2+)(in) = Ca(2+)(out). It carries out the reaction K(+)(in) = K(+)(out). The catalysed reaction is Na(+)(in) = Na(+)(out). With respect to regulation, activated by a myriad of ligands such as acetylcholine, cytisine, nicotine, choline and epibatidine. Channel potentiation by calcium is stoichiometry-selective, CHRNA4:CHRNB2 nACh receptor is achieved by calcium association with topographically distinct sites framed by anionic residues within the CHRNA4 subunit and between the CHRNA4 and CHRNB2 subunits. nAChR activity is inhibited by the antagonist alpha-conotoxins BuIA, PnIA, GID and MII, small disulfide-constrained peptides from cone snails. Component of neuronal acetylcholine receptors (nAChRs) that function as pentameric, ligand-gated cation channels with high calcium permeability among other activities. nAChRs are excitatory neurotrasnmitter receptors formed by a collection of nAChR subunits known to mediate synaptic transmission in the nervous system and the neuromuscular junction. Each nAchR subunit confers differential attributes to channel properties, including activation, deactivation and desensitization kinetics, pH sensitivity, cation permeability, and binding to allosteric modulators. CHRNA4 forms heteropentameric neuronal acetylcholine receptors with CHRNB2 and CHRNB4, as well as CHRNA5 and CHRNB3 as accesory subunits. Is the most abundant nAChR subtype expressed in the central nervous system. Found in two major stoichiometric forms,(CHRNA4)3:(CHRNB2)2 and (CHRNA4)2:(CHRNB2)3, the two stoichiometric forms differ in their unitary conductance, calcium permeability, ACh sensitivity and potentiation by divalent cation. Involved in the modulation of calcium-dependent signaling pathways, influences the release of neurotransmitters, including dopamine, glutamate and GABA. This chain is Neuronal acetylcholine receptor subunit alpha-4 (Chrna4), found in Rattus norvegicus (Rat).